The sequence spans 179 residues: Ribosome maturation factor RimM (179 aa).

The PRC barrel domain maps to 102–175 (VEMWWDRDLV…RIVVDPPPGL (74 aa)).

This sequence belongs to the RimM family. In terms of assembly, binds ribosomal protein uS19.

The protein localises to the cytoplasm. Functionally, an accessory protein needed during the final step in the assembly of 30S ribosomal subunit, possibly for assembly of the head region. Essential for efficient processing of 16S rRNA. May be needed both before and after RbfA during the maturation of 16S rRNA. It has affinity for free ribosomal 30S subunits but not for 70S ribosomes. This is Ribosome maturation factor RimM from Frankia casuarinae (strain DSM 45818 / CECT 9043 / HFP020203 / CcI3).